Reading from the N-terminus, the 586-residue chain is FAD-linked oxidoreductase orf1 (586 aa).

An N-terminal signal peptide occupies residues 1–17 (MKSFATTVLLVTPGIYA). N-linked (GlcNAc...) asparagine glycans are attached at residues Asn29, Asn51, Asn79, Asn110, Asn146, Asn188, Asn314, Asn321, Asn358, Asn402, Asn434, and Asn461. Positions 124-303 (TLGNYVSYAI…LSMTAKVHPD (180 aa)) constitute an FAD-binding PCMH-type domain.

It belongs to the oxygen-dependent FAD-linked oxidoreductase family.

The catalysed reaction is betaenone C = betaenone A. It participates in mycotoxin biosynthesis. In terms of biological role, FAD-linked oxidoreductase; part of the gene cluster that mediates the biosynthesis of betaenones, phytotoxic polyketides involved in leaf spot disease in sugar beets. The first step of the pathway is the synthesis of dehydroprobetaenone I by the polyketide synthase bet1 and the enoyl reductase bet3 via condensation of one acetyl-CoA starter unit with 7 malonyl-CoA units and 5 methylations. The C-terminal reductase (R) domain of bet1 catalyzes the reductive release of the polyketide chain. Because bet1 lacks a designated enoylreductase (ER) domain, the required activity is provided the enoyl reductase bet3. The short-chain dehydrogenase/reductase bet4 then catalyzes reduction of dehydroprobetaenone I to probetaenone I. The cytochrome P450 monooxygenase bet2 catalyzes successive epoxidation, oxidation (resulting from epoxide opening) and hydroxylation to install a tertiary alcohol in the decaline ring to yield betaenone C from dehydroprobetaenone I and betaenone B from probetaenone I. The FAD-linked oxidoreductase (orf1) is probably responsible for the conversion of betaenone C to betaenone A via an intramolecular aldol reaction between C-1 and C-17 to form the bridged tricyclic system in betaenone A. The protein is FAD-linked oxidoreductase orf1 of Neocamarosporium betae (Beet black rot fungus).